The primary structure comprises 131 residues: Global transcriptional regulator Spx (131 aa).

Cysteine 10 and cysteine 13 are oxidised to a cystine.

The protein belongs to the ArsC family. Spx subfamily. In terms of assembly, interacts with the C-terminal domain of the alpha subunit of the RNAP.

Its subcellular location is the cytoplasm. Under non-stress conditions, Spx is degraded by ClpXP. Efficient degradation by ClpXP requires the adapter protein SpxH/YjbH. Function, levels and solubility of Spx are affected by SpxH/YjbH aggregation and stress conditions. Functionally, global transcriptional regulator that plays a key role in stress response and exerts either positive or negative regulation of genes. Acts by interacting with the C-terminal domain of the alpha subunit of the RNA polymerase (RNAP). This interaction can enhance binding of RNAP to the promoter region of target genes and stimulate their transcription, or block interaction of RNAP with activator proteins and repress transcription. Its function is as follows. Required for transcription of thioredoxin reductase (trxB). Modulates the expression of icaR, encoding a repressor of the biofilm operon icaADBC. Also controls the transcription of trfA, a gene implicated in cell wall antibiotic resistance, which in turn is required for degradation of MazE antitoxin, the unstable component of the MazEF toxin-antitoxin system, that neutralizes the endoribonuclease activity of MazF toxin. The sequence is that of Global transcriptional regulator Spx from Staphylococcus aureus (strain NCTC 8325 / PS 47).